The following is a 400-amino-acid chain: Protection of telomeres homolog 1 (400 aa).

The protein belongs to the telombin family. Expressed in sperm and oocytes.

The protein localises to the nucleus. It is found in the nucleus envelope. The protein resides in the chromosome. It localises to the telomere. Telomeric DNA-binding protein, which binds to single-stranded C-rich repeat sequences, with high specificity to the 5'-GCCTAA-3' sequence. Repeat sequence binding can be at the 5' or 3' telomeric end. May have a role in protecting the 5' end of the C-rich strand of the telomere. Acts redundantly with pot-2 to negatively regulate telomerase-mediated telomere extension. Also regulates telomere length by the telomerase-independent telomere maintenance pathway called ALT (alternative lengthening of telomeres). Through sun-1, anchors telomeres to the nuclear envelope in embryos. In Caenorhabditis elegans, this protein is Protection of telomeres homolog 1.